The sequence spans 413 residues: MHDYFGGWFKLEQEVARQLRILRRGVAEIVPEEDLQAKLRKSLATGKPLKVKLGLDPTAPDIHLGHTVVLQKLRQFQELGHQVIIIIGDFTGRIGDPTGKSETRRQLTEAEILANAETYKEQIFKVLDPEQTRVTFNSHWLGKLTFAEVIELAARTTVARMLERDDFARRFQENRPISIHEFFYPLMQGYDSVALAADVELGGTDQKFNLLMGRHLQREYGQEPQVAMMMPILPGLDGVQKMSKSLGNYIGIKESPREMYGKTMSLPDELMLTYYELVTAVPLEELAAIRQGLASGSLHPRDAKMRLAREIVAMYHTPEAALEAEREFRQVFQQHDLPDDMPELTIKEDRVWLPRLMVQAGLAPSTSEARRLIRQGAVKIDGERVTDPDTEVEVREGQVLQAGKRKFARLHTF.

A 'HIGH' region motif is present at residues 57–66 (PTAPDIHLGH). A 'KMSKS' region motif is present at residues 241–245 (KMSKS). Residue Lys244 participates in ATP binding. In terms of domain architecture, S4 RNA-binding spans 351 to 412 (VWLPRLMVQA…GKRKFARLHT (62 aa)).

This sequence belongs to the class-I aminoacyl-tRNA synthetase family. TyrS type 2 subfamily. In terms of assembly, homodimer.

Its subcellular location is the cytoplasm. The catalysed reaction is tRNA(Tyr) + L-tyrosine + ATP = L-tyrosyl-tRNA(Tyr) + AMP + diphosphate + H(+). Its function is as follows. Catalyzes the attachment of tyrosine to tRNA(Tyr) in a two-step reaction: tyrosine is first activated by ATP to form Tyr-AMP and then transferred to the acceptor end of tRNA(Tyr). The protein is Tyrosine--tRNA ligase of Moorella thermoacetica (strain ATCC 39073 / JCM 9320).